Reading from the N-terminus, the 310-residue chain is tRNA dimethylallyltransferase (310 aa).

Residue 9 to 16 (GPTAVGKT) participates in ATP binding. 11 to 16 (TAVGKT) lines the substrate pocket. Residues 34-37 (DSMQ) form an interaction with substrate tRNA region.

This sequence belongs to the IPP transferase family. In terms of assembly, monomer. It depends on Mg(2+) as a cofactor.

The enzyme catalyses adenosine(37) in tRNA + dimethylallyl diphosphate = N(6)-dimethylallyladenosine(37) in tRNA + diphosphate. Functionally, catalyzes the transfer of a dimethylallyl group onto the adenine at position 37 in tRNAs that read codons beginning with uridine, leading to the formation of N6-(dimethylallyl)adenosine (i(6)A). This chain is tRNA dimethylallyltransferase, found in Syntrophomonas wolfei subsp. wolfei (strain DSM 2245B / Goettingen).